Consider the following 268-residue polypeptide: Undecaprenyl-diphosphatase (268 aa).

A run of 7 helical transmembrane segments spans residues 43-63 (FWNT…VVIY), 83-103 (FVIG…IAGK), 109-129 (LFNP…LMWV), 144-164 (FPLP…IPGV), 184-204 (AAEF…AYDF), 218-238 (IVAI…KAFL), and 246-266 (FTFF…ALAL).

Belongs to the UppP family.

The protein resides in the cell inner membrane. It carries out the reaction di-trans,octa-cis-undecaprenyl diphosphate + H2O = di-trans,octa-cis-undecaprenyl phosphate + phosphate + H(+). Functionally, catalyzes the dephosphorylation of undecaprenyl diphosphate (UPP). Confers resistance to bacitracin. This chain is Undecaprenyl-diphosphatase, found in Nitrobacter hamburgensis (strain DSM 10229 / NCIMB 13809 / X14).